Reading from the N-terminus, the 535-residue chain is MATASVAFKSREDHRKQIELEEARKAGLAPAEVDEDGKEINPHIPQYMSSAPWYLNSEKPSLKHQRKWKSDPNYTKSWYDRGAKIFQAEKYRKGACQNCGAMTHTAKACMDRPRKIGAKYTNMNIAPDEKIESFELDYDGKRDRWNGYDPSTYHRVIDLYEAKEDARKKYLKEQQLKKLEEKNNNEKGDDANSDGEEDEDDLRVDEAKVDESRQMDFAKVEKRVRTTGGGSTGTVRNLRIREDTAKYLLNLDVNSAHYDPKTRSMREDPLPDADPNDKFYLGDNQYRNSGQALEFKQLNIHSWEAFDKGQDMHMQAAPSQAELLYKSFQVAKEKLKSQTKDTIMDKYGNAATEDEIPMELLLGQSERQVEYDRAGRIIKGQEVILPKSKYEEDVHANNHTSVWGSYWKDHQWGYKCCQQIIRNSYCTGSAGIEAAEAALDLMKANIARKEATEESPKKVEEKRMASWGTDIPEDLELNEEALANALKKEDLSRREEKDERKRKYNVKYNNDVTPEEMEAYRMKRVHHEDPMKDFL.

The interval 21–44 (EEARKAGLAPAEVDEDGKEINPHI) is disordered. The CCHC-type zinc finger occupies 96 to 109 (CQNCGAMTHTAKAC). Over residues 176–190 (LKKLEEKNNNEKGDD) the composition is skewed to basic and acidic residues. Disordered stretches follow at residues 176-204 (LKKL…DLRV) and 489-508 (EDLS…NVKY). The segment covering 191–203 (ANSDGEEDEDDLR) has biased composition (acidic residues). At S193 the chain carries Phosphoserine. Residues 486–493 (LKKEDLSR) carry the Nuclear localization signal motif. Residues 489 to 501 (EDLSRREEKDERK) are compositionally biased toward basic and acidic residues.

It belongs to the SLU7 family. In terms of tissue distribution, mainly expressed in tissues undergoing cell proliferation, particularly in lateral organs.

It localises to the nucleus. In terms of biological role, participates in the second catalytic step of pre-mRNA splicing, when the free hydroxyl group of exon I attacks the 3'-splice site to generate spliced mRNA and the excised lariat intron. Together with SMP2, involved in the timing of cell cycle arrest during leaf development, in a STRUWWELPETER (SWP) dependent manner; promotes cell proliferation in developing organs. The polypeptide is Pre-mRNA-splicing factor SLU7-A (Arabidopsis thaliana (Mouse-ear cress)).